The chain runs to 382 residues: UDP-N-acetylglucosamine--N-acetylmuramyl-(pentapeptide) pyrophosphoryl-undecaprenol N-acetylglucosamine transferase (382 aa).

Residues 11–13 (TGG), N124, R165, S200, I254, and Q299 each bind UDP-N-acetyl-alpha-D-glucosamine.

This sequence belongs to the glycosyltransferase 28 family. MurG subfamily.

The protein localises to the cell inner membrane. It carries out the reaction di-trans,octa-cis-undecaprenyl diphospho-N-acetyl-alpha-D-muramoyl-L-alanyl-D-glutamyl-meso-2,6-diaminopimeloyl-D-alanyl-D-alanine + UDP-N-acetyl-alpha-D-glucosamine = di-trans,octa-cis-undecaprenyl diphospho-[N-acetyl-alpha-D-glucosaminyl-(1-&gt;4)]-N-acetyl-alpha-D-muramoyl-L-alanyl-D-glutamyl-meso-2,6-diaminopimeloyl-D-alanyl-D-alanine + UDP + H(+). It participates in cell wall biogenesis; peptidoglycan biosynthesis. In terms of biological role, cell wall formation. Catalyzes the transfer of a GlcNAc subunit on undecaprenyl-pyrophosphoryl-MurNAc-pentapeptide (lipid intermediate I) to form undecaprenyl-pyrophosphoryl-MurNAc-(pentapeptide)GlcNAc (lipid intermediate II). The chain is UDP-N-acetylglucosamine--N-acetylmuramyl-(pentapeptide) pyrophosphoryl-undecaprenol N-acetylglucosamine transferase from Nitratidesulfovibrio vulgaris (strain DSM 19637 / Miyazaki F) (Desulfovibrio vulgaris).